A 356-amino-acid polypeptide reads, in one-letter code: 4-hydroxy-3-methylbut-2-en-1-yl diphosphate synthase (flavodoxin) (356 aa).

[4Fe-4S] cluster-binding residues include cysteine 264, cysteine 267, cysteine 299, and glutamate 306.

Belongs to the IspG family. [4Fe-4S] cluster is required as a cofactor.

It catalyses the reaction (2E)-4-hydroxy-3-methylbut-2-enyl diphosphate + oxidized [flavodoxin] + H2O + 2 H(+) = 2-C-methyl-D-erythritol 2,4-cyclic diphosphate + reduced [flavodoxin]. Its pathway is isoprenoid biosynthesis; isopentenyl diphosphate biosynthesis via DXP pathway; isopentenyl diphosphate from 1-deoxy-D-xylulose 5-phosphate: step 5/6. Its function is as follows. Converts 2C-methyl-D-erythritol 2,4-cyclodiphosphate (ME-2,4cPP) into 1-hydroxy-2-methyl-2-(E)-butenyl 4-diphosphate. The polypeptide is 4-hydroxy-3-methylbut-2-en-1-yl diphosphate synthase (flavodoxin) (Campylobacter lari (strain RM2100 / D67 / ATCC BAA-1060)).